The sequence spans 171 residues: uncharacterized protein (171 aa).

This is an uncharacterized protein from Bacillus subtilis (strain 168).